Here is a 308-residue protein sequence, read N- to C-terminus: Testis-specific Y-encoded protein 8 (308 aa).

It belongs to the nucleosome assembly protein (NAP) family.

Its subcellular location is the cytoplasm. It is found in the nucleus. In terms of biological role, may be involved in sperm differentiation and proliferation. The polypeptide is Testis-specific Y-encoded protein 8 (TSPY8) (Homo sapiens (Human)).